The chain runs to 1781 residues: BCL-6 corepressor-like protein 1 (1781 aa).

Disordered regions lie at residues 64 to 136 (AVGS…SHSR) and 337 to 362 (ASTPPAAPAPPSVPMPTPTPSSGPPS). Polar residues-rich tracts occupy residues 66 to 82 (GSGSNARGTNPDGNTTE) and 127 to 136 (PDSTEASHSR). Ser-490 bears the Phosphoserine mark. Over residues 521-531 (SCTSPSSSTNS) the composition is skewed to low complexity. Disordered regions lie at residues 521–545 (SCTSPSSSTNSQPAPDGVPGPLADT), 561–616 (LLPA…EMPL), 733–777 (NRDP…STVK), 869–895 (PLGSSETVHGLPEGQPRPGGPFAPEQD), and 933–960 (QPSSGDMGVNQGSEESESHLCSDSTPKM). The span at 581–594 (TDQQTEGTSVTFSP) shows a compositional bias: polar residues. Phosphoserine is present on residues Ser-593 and Ser-607. Residue Lys-741 forms a Glycyl lysine isopeptide (Lys-Gly) (interchain with G-Cter in SUMO2) linkage. Ser-1024 carries the phosphoserine modification. Residue Lys-1087 forms a Glycyl lysine isopeptide (Lys-Gly) (interchain with G-Cter in SUMO2) linkage. Positions 1100–1484 (WQPDEETESL…PTARQIPPEA (385 aa)) are disordered. The segment covering 1116–1127 (CNKEKEIEEEPR) has biased composition (basic and acidic residues). Ser-1162 is subject to Phosphoserine. The segment covering 1176–1185 (VRGKHKHRKP) has biased composition (basic residues). Positions 1195 to 1213 (KRTDGHEEGSLEKKAKNSF) are enriched in basic and acidic residues. Over residues 1222-1234 (STRTRSQSGSICS) the composition is skewed to polar residues. Composition is skewed to basic and acidic residues over residues 1271–1284 (TQRDTQYRSHHAQD) and 1297–1307 (RAREMPWRTEA). Residues 1314–1324 (TNEEEEDDEEE) are compositionally biased toward acidic residues. A compositionally biased stretch (basic residues) spans 1328 to 1339 (KRKKRRRQKSRK). Basic and acidic residues predominate over residues 1350–1362 (EEQRRKGRADSKA). 2 stretches are compositionally biased toward polar residues: residues 1381–1394 (LLLSSKAQGISDSP) and 1437–1449 (RWSQQKTRSSKSP). ANK repeat units follow at residues 1493–1523 (AGETLLQRAARLGYKDVVLYCLQKHSEDVNH), 1527–1556 (AGYTALHEACSRGWTDILNILLQHGANVNC), and 1560–1589 (DGTRPVHDAVVNDNLETIWLLLSYGADPTL). Positions 1664–1781 (DDFMFELSDK…SEVEYQSWSS (118 aa)) are PCGF Ub-like fold domain (PUFD); required for the interaction with the KDM2B-SKP1 heterodimeric complex.

This sequence belongs to the BCOR family. As to quaternary structure, interacts with PCGF1, forming heterodimers. The PCGF1-BCORL1 heterodimeric complex interacts with the KDM2B-SKP1 heterodimeric complex to form a homotetrameric polycomb repression complex 1 (PRC1.1). Interacts with SKP1. Interacts with CTBP1, HDAC4, HDAC5 and HDAC7. In terms of tissue distribution, highly expressed in lung and testis.

It is found in the nucleus. Its function is as follows. Transcriptional corepressor. May specifically inhibit gene expression when recruited to promoter regions by sequence specific DNA-binding proteins such as BCL6. This repression may be mediated at least in part by histone deacetylase activities which can associate with this corepressor. The sequence is that of BCL-6 corepressor-like protein 1 (Bcorl1) from Mus musculus (Mouse).